Reading from the N-terminus, the 312-residue chain is MAEFEDQLVFNSISARALKAYFTAKINEMVDELVTRKCPQKKKSQAKKPEVRIPVDLVKSSFVKKFGLCNYGGILISLINSLVENNFFTKNGKLDDTGKKELVLTDVEKRILNTIDKSSPLYIDISDVKVLAARLKRSATQFNFNGHTYHLENDKIEDLINQLVKDESIQLDEKSSIKDSMYVIPDELIDVLKTRLFRSPQVKDNIISRTRLYDYFTRVTKRDESSIYVILKDPRIASILSLETVKMGAFMYTKHSMLTNAISSRVDRYSKKFQESFYEDIAEFVKENERVNVSRVVECLTVPNITISSNTE.

The protein belongs to the orthopoxvirus OPG077 family.

Its subcellular location is the virion. Its function is as follows. DNA-binding protein which binds to the hairpin form of the viral telomeric sequence. Required for the production of mature virions (MV). The chain is Telomere-binding protein OPG077 (OPG077) from Monkeypox virus.